A 150-amino-acid polypeptide reads, in one-letter code: MQLLSPAFAYGAPIPKKYTCQGAGISPPLTFVDVPGAAQSLALIVEDPDVPKEIRSDGLWIHWIVYNLSTTITNLAEGAEIFAVQGLNTSGKPVYEGPCPPDKQHRYFFTLFALDVVLPEEENVTRDQLYEAMEFHIIEQAELMGTYEKS.

This sequence belongs to the UPF0098 family.

This chain is UPF0098 protein CPn_0877/CP_0992/CPj0877/CpB0906, found in Chlamydia pneumoniae (Chlamydophila pneumoniae).